Reading from the N-terminus, the 366-residue chain is Protein-glutamate methylesterase/protein-glutamine glutaminase 2 (366 aa).

Residues 3–119 form the Response regulatory domain; that stretch reads RLLIADDSAL…SLELDRLRPL (117 aa). The residue at position 53 (aspartate 53) is a 4-aspartylphosphate. A disordered region spans residues 149–168; it reads AASSPRAKAARRGAARQRAK. Over residues 156-166 the composition is skewed to basic residues; that stretch reads KAARRGAARQR. Positions 171–363 constitute a CheB-type methylesterase domain; that stretch reads PAPGLVLIGT…AAVIEWGNAD (193 aa). Catalysis depends on residues serine 181, histidine 208, and aspartate 305.

Belongs to the CheB family. In terms of processing, phosphorylated by CheA. Phosphorylation of the N-terminal regulatory domain activates the methylesterase activity.

The protein resides in the cytoplasm. The enzyme catalyses [protein]-L-glutamate 5-O-methyl ester + H2O = L-glutamyl-[protein] + methanol + H(+). It catalyses the reaction L-glutaminyl-[protein] + H2O = L-glutamyl-[protein] + NH4(+). Involved in chemotaxis. Part of a chemotaxis signal transduction system that modulates chemotaxis in response to various stimuli. Catalyzes the demethylation of specific methylglutamate residues introduced into the chemoreceptors (methyl-accepting chemotaxis proteins or MCP) by CheR. Also mediates the irreversible deamidation of specific glutamine residues to glutamic acid. This Rhodopseudomonas palustris (strain BisB18) protein is Protein-glutamate methylesterase/protein-glutamine glutaminase 2.